A 148-amino-acid polypeptide reads, in one-letter code: Ribose-5-P isomerase B (148 aa).

8-9 (DE) serves as a coordination point for D-ribulose 5-phosphate. C65 (proton acceptor) is an active-site residue. Residues 66 to 70 (GTGIG), N99, R132, and K136 contribute to the D-ribulose 5-phosphate site.

This sequence belongs to the LacAB/RpiB family.

It carries out the reaction aldehydo-D-ribose 5-phosphate = D-ribulose 5-phosphate. The protein operates within carbohydrate degradation; pentose phosphate pathway; D-ribose 5-phosphate from D-ribulose 5-phosphate (non-oxidative stage): step 1/1. Catalyzes the interconversion of ribulose-5-P and ribose-5-P. This chain is Ribose-5-P isomerase B, found in Listeria innocua serovar 6a (strain ATCC BAA-680 / CLIP 11262).